Reading from the N-terminus, the 99-residue chain is Large ribosomal subunit protein eL36A (99 aa).

Belongs to the eukaryotic ribosomal protein eL36 family. In terms of assembly, component of the large ribosomal subunit (LSU). Mature yeast ribosomes consist of a small (40S) and a large (60S) subunit. The 40S small subunit contains 1 molecule of ribosomal RNA (18S rRNA) and at least 33 different proteins. The large 60S subunit contains 3 rRNA molecules (25S, 5.8S and 5S rRNA) and at least 46 different proteins.

It localises to the cytoplasm. Its function is as follows. Component of the ribosome, a large ribonucleoprotein complex responsible for the synthesis of proteins in the cell. The small ribosomal subunit (SSU) binds messenger RNAs (mRNAs) and translates the encoded message by selecting cognate aminoacyl-transfer RNA (tRNA) molecules. The large subunit (LSU) contains the ribosomal catalytic site termed the peptidyl transferase center (PTC), which catalyzes the formation of peptide bonds, thereby polymerizing the amino acids delivered by tRNAs into a polypeptide chain. The nascent polypeptides leave the ribosome through a tunnel in the LSU and interact with protein factors that function in enzymatic processing, targeting, and the membrane insertion of nascent chains at the exit of the ribosomal tunnel. This Schizosaccharomyces pombe (strain 972 / ATCC 24843) (Fission yeast) protein is Large ribosomal subunit protein eL36A (rpl3601).